The primary structure comprises 117 residues: UPF0342 protein GWCH70_0629 (117 aa).

It belongs to the UPF0342 family.

The polypeptide is UPF0342 protein GWCH70_0629 (Geobacillus sp. (strain WCH70)).